Consider the following 219-residue polypeptide: uncharacterized protein (219 aa).

Residues 13–32 (VFGLFLFSLIFFGLLSLATF) traverse the membrane as a helical segment.

It is found in the membrane. This is an uncharacterized protein from Aquifex aeolicus (strain VF5).